The sequence spans 183 residues: NAD(P)H-quinone oxidoreductase subunit J (183 aa).

The segment at 1 to 21 is disordered; the sequence is MAEENAQEKQAPPSAGEQSEP.

This sequence belongs to the complex I 30 kDa subunit family. NDH-1 can be composed of about 15 different subunits; different subcomplexes with different compositions have been identified which probably have different functions.

It localises to the cellular thylakoid membrane. The catalysed reaction is a plastoquinone + NADH + (n+1) H(+)(in) = a plastoquinol + NAD(+) + n H(+)(out). It carries out the reaction a plastoquinone + NADPH + (n+1) H(+)(in) = a plastoquinol + NADP(+) + n H(+)(out). Its function is as follows. NDH-1 shuttles electrons from an unknown electron donor, via FMN and iron-sulfur (Fe-S) centers, to quinones in the respiratory and/or the photosynthetic chain. The immediate electron acceptor for the enzyme in this species is believed to be plastoquinone. Couples the redox reaction to proton translocation, and thus conserves the redox energy in a proton gradient. Cyanobacterial NDH-1 also plays a role in inorganic carbon-concentration. This Synechococcus sp. (strain JA-2-3B'a(2-13)) (Cyanobacteria bacterium Yellowstone B-Prime) protein is NAD(P)H-quinone oxidoreductase subunit J.